Reading from the N-terminus, the 409-residue chain is Sprouty-related, EVH1 domain-containing protein 2 (409 aa).

A WH1 domain is found at 5-121 (APPEDDSYIV…RGVRKAIEDL (117 aa)). Residues 121–170 (LTEGSTTSSSTIHNEAELGDDDVFATSTDSSSNSSQKREPPVRTIASPLP) are disordered. Residues 123–133 (EGSTTSSSTIH) are compositionally biased toward polar residues. Residues 146-155 (TSTDSSSNSS) are compositionally biased toward low complexity. In terms of domain architecture, KBD spans 199-253 (PHRHVSFPDDDDEIVRINPRERNWLTGYEDYRQAPIHRKYPDTESIDSYVRFAKS). Residues 299-407 (RCIYCRDMFN…CGCCGGKHKA (109 aa)) form the SPR domain.

Its subcellular location is the cell membrane. The protein localises to the cytoplasmic vesicle. The protein resides in the secretory vesicle membrane. It is found in the cytoplasm. Functionally, negatively regulates Ras signaling pathways and downstream activation of MAP kinases. This is Sprouty-related, EVH1 domain-containing protein 2 (spred2) from Xenopus tropicalis (Western clawed frog).